Consider the following 213-residue polypeptide: Orotate phosphoribosyltransferase (213 aa).

K26 contacts 5-phospho-alpha-D-ribose 1-diphosphate. 34–35 (FF) provides a ligand contact to orotate. Residues 72 to 73 (YK), R99, K100, K103, H105, and 124 to 132 (DDVITAGTA) contribute to the 5-phospho-alpha-D-ribose 1-diphosphate site. Orotate is bound by residues T128 and R156.

This sequence belongs to the purine/pyrimidine phosphoribosyltransferase family. PyrE subfamily. As to quaternary structure, homodimer. It depends on Mg(2+) as a cofactor.

It catalyses the reaction orotidine 5'-phosphate + diphosphate = orotate + 5-phospho-alpha-D-ribose 1-diphosphate. Its pathway is pyrimidine metabolism; UMP biosynthesis via de novo pathway; UMP from orotate: step 1/2. Functionally, catalyzes the transfer of a ribosyl phosphate group from 5-phosphoribose 1-diphosphate to orotate, leading to the formation of orotidine monophosphate (OMP). The chain is Orotate phosphoribosyltransferase from Haemophilus ducreyi (strain 35000HP / ATCC 700724).